Consider the following 207-residue polypeptide: Partner of Y14 and mago (207 aa).

Disordered stretches follow at residues 1-28 and 52-133; these read MSTY…KARR and QRQA…NSIS. Residues 64–91 are a coiled coil; it reads LLAAESKKEREKQERTRAKKQEKESGRQ. A compositionally biased stretch (basic and acidic residues) spans 68 to 90; sequence ESKKEREKQERTRAKKQEKESGR. Residues 123-133 are compositionally biased toward polar residues; sequence PSGSRDINSIS. A coiled-coil region spans residues 152–184; sequence AKQLKKLRKKIREIEQIESRIQAGEQKKLDKDQ.

This sequence belongs to the pym family. Interacts (via N-terminus) with mago and tsu/RBM8A; the interaction is direct. In terms of tissue distribution, expression detected in the ovary. In the oocyte expressed in the germarium, nurse cell and follicle cell.

The protein resides in the cytoplasm. The protein localises to the nucleus. Its function is as follows. Regulator of the exon junction complex (EJC), a multiprotein complex that associates immediately upstream of the exon-exon junction on mRNAs and serves as a positional landmark for the intron exon structure of genes and directs post-transcriptional processes in the cytoplasm such as mRNA export, nonsense-mediated mRNA decay (NMD) or translation. Acts as an EJC disassembly factor by disrupting mature EJC from spliced mRNAs. Required for normal localization of osk mRNA to the posterior pole of the developing oocyte. Does not interact with the small ribosomal unit or components of the translation initiation complex. May not function in cap-dependent translation regulation. This is Partner of Y14 and mago from Drosophila melanogaster (Fruit fly).